Consider the following 439-residue polypeptide: Serine hydroxymethyltransferase (439 aa).

127 to 129 serves as a coordination point for (6S)-5,6,7,8-tetrahydrofolate; that stretch reads AHV. Residue K233 is modified to N6-(pyridoxal phosphate)lysine.

The protein belongs to the SHMT family. As to quaternary structure, homodimer. Pyridoxal 5'-phosphate serves as cofactor.

The protein localises to the cytoplasm. The protein operates within amino-acid biosynthesis; glycine biosynthesis; glycine from L-serine: step 1/1. Functionally, catalyzes the reversible interconversion of serine and glycine with a modified folate serving as the one-carbon carrier. Also exhibits a pteridine-independent aldolase activity toward beta-hydroxyamino acids, producing glycine and aldehydes, via a retro-aldol mechanism. The polypeptide is Serine hydroxymethyltransferase (Aeropyrum pernix (strain ATCC 700893 / DSM 11879 / JCM 9820 / NBRC 100138 / K1)).